Here is a 101-residue protein sequence, read N- to C-terminus: Small ribosomal subunit protein uS14 (101 aa).

It belongs to the universal ribosomal protein uS14 family. Part of the 30S ribosomal subunit. Contacts proteins S3 and S10.

Functionally, binds 16S rRNA, required for the assembly of 30S particles and may also be responsible for determining the conformation of the 16S rRNA at the A site. This chain is Small ribosomal subunit protein uS14, found in Rhizobium johnstonii (strain DSM 114642 / LMG 32736 / 3841) (Rhizobium leguminosarum bv. viciae).